The sequence spans 134 residues: Retinol-binding protein 2 (134 aa).

Lys41 and Gln109 together coordinate all-trans-retinol.

It belongs to the calycin superfamily. Fatty-acid binding protein (FABP) family. Higher expression in adult small intestine and to a much lesser extent in fetal kidney.

It is found in the cytoplasm. Intracellular transport of retinol. This Homo sapiens (Human) protein is Retinol-binding protein 2 (RBP2).